Consider the following 321-residue polypeptide: Annexin A5 (321 aa).

Annexin repeat units follow at residues 15–86, 87–158, 170–242, and 246–317; these read FDAR…SLMR, PARI…VLLQ, ALVE…AVVK, and SVPA…LLCG.

The protein belongs to the annexin family.

In terms of biological role, collagen-binding protein. In Gallus gallus (Chicken), this protein is Annexin A5 (ANXA5).